The sequence spans 1720 residues: Merozoite surface protein 1 (1720 aa).

Positions 1–19 (MKIIFFLCSFLFFIINTQC) are cleaved as a signal peptide. The span at 63-112 (ASAQSGASAQSGASAQSGASAQSGASAQSGASAQSGTSGPSGPSGTSPSS) shows a compositional bias: low complexity. Residues 63–137 (ASAQSGASAQ…PPADASDSDA (75 aa)) are disordered. Residues 113 to 122 (RSNTLPRSNT) are compositionally biased toward polar residues. The span at 123-132 (SSGASPPADA) shows a compositional bias: low complexity. Residues 474–519 (INNIKKKIDLEEKNINHTKEQNKKLLEDYEKSKKDYEELLEKFYEM) adopt a coiled-coil conformation. Disordered stretches follow at residues 723 to 775 (SETT…PPKE), 908 to 955 (TGTS…SGPA), 1249 to 1278 (TPPQ…TQIP), and 1470 to 1491 (KEKF…DEQK). Residues 743–753 (EVTEETEETEE) are compositionally biased toward acidic residues. Residues 908–946 (TGTSSTSSPGNTTVNTAQSATHSNSQNQQSNASSTNTQN) show a composition bias toward low complexity. Residues 1264 to 1278 (VSGSSGSTKEETQIP) show a composition bias toward polar residues. The segment covering 1475–1484 (SSPPTTPPSP) has biased composition (pro residues). 2 EGF-like domains span residues 1611–1651 (HQCV…VENP) and 1652–1693 (NPTC…YPLF). Disulfide bonds link cysteine 1613–cysteine 1624, cysteine 1618–cysteine 1634, cysteine 1636–cysteine 1647, cysteine 1655–cysteine 1668, cysteine 1662–cysteine 1682, and cysteine 1684–cysteine 1698. Residue serine 1699 is the site of GPI-anchor amidated serine attachment. The propeptide at 1700–1720 (SSNFLGISFLLILMLILYSFI) is removed in mature form.

In terms of assembly, forms a complex composed of subunits p83, p30, p38, and p42 which remain non-covalently associated; the complex is formed at the merozoite surface prior to egress from host erythrocytes. Forms a complex composed of processed MSP1 subunits, MSP6 subunit p36 and MSP7; the complex is formed at the merozoite surface prior to egress from host erythrocytes. Within the complex, interacts (via subunit p38) with MSP6 subunit p36 and (via subunits p83, p30 and p38) with MSP7 (via subunit p22). Forms a complex composed of MSP1, MSP6, DBLMSP1 and DBLMSP2. Within the complex, interacts (via subunit p38) with DBLMSP1 and DBLMSP2. Forms a complex composed of MSP1, and rhoptry proteins RhopH3, RAP1 and CLAG9/RhopH3. Within the complex, interacts (via subunits p42 and p19) with RhopH3 (via C-terminus). Forms a complex composed of MSP1, MSP6, MSP7, MSP9 and MSP3; within the complex, MSP6 and MSP9 mediate the binding to the host erythrocyte. Interacts (via subunits p19 and p42) with MSP9; the interaction is direct; MSP1 subunits p19 or p42, and MSP9 form a co-ligand complex that interacts with host SLC4A1/Band 3 protein. May interact with PFD6. Interacts with host spectrin. Interacts with host glycophorin GYPA in a sialic acid-independent manner. As to quaternary structure, interacts with host proinflammatory cytokine S100P; the interaction blocks S100P inflammatory and chemotactic activities. In terms of assembly, interacts with host SLC4A1/Band 3 (via 5ABC region) on the host erythrocyte surface in a sialic acid-independent manner. In terms of processing, the p190 precursor is cleaved by SUB1 prior to merozoite egress into 4 subunits p83, p30, p38, and p42 which remain non-covalently associated. SUB1-mediated proteolytic cleavage occurs in an orderly manner; the first cleavage occurs at the p30/p38 site, followed by cleavage at the p83/p30 site, in the 3D7 strain a second cleavage occurs at the N-terminus of p83, the last cleavage occurs at the p38/p42 site. The order of cleavage is essential for parasite viability. SUB1-mediated processing is essential for merozoite egress. In a second processing step during erythrocyte invasion, p42 is cleaved by SUB2 into p33 and p19; the latter remains attached to the merozoite surface via its GPI-anchor and is endocytosed during the subsequent ring stage.

Its subcellular location is the cell membrane. It localises to the secreted. The protein resides in the vacuole membrane. During the asexual blood stage, involved in merozoite egress from host erythrocytes possibly via its interaction with the host cytoskeleton protein spectrin resulting in the destabilization of the host cytoskeleton and thus leading to erythrocyte cell membrane rupture. Involved in the binding to host erythrocytes and is required for host erythrocyte invasion. In terms of biological role, by binding to host proinflammatory cytokine S100P may interfere with host immune responses. Its function is as follows. Involved in merozoite invasion of host erythrocytes. May play a role in the biogenesis and/or function of the food vacuole during the intraerythrocytic development. This Plasmodium falciparum (isolate 3D7) protein is Merozoite surface protein 1.